A 462-amino-acid polypeptide reads, in one-letter code: Siroheme synthase (462 aa).

Positions 1 to 201 are precorrin-2 dehydrogenase /sirohydrochlorin ferrochelatase; that stretch reads MQFLPLFHKL…GKPEEGERLL (201 aa). Residues 22 to 23 and 43 to 44 contribute to the NAD(+) site; these read EV and PE. The residue at position 126 (Ser-126) is a Phosphoserine. The segment at 214 to 462 is uroporphyrinogen-III C-methyltransferase; the sequence is GEVYLVGAGP…AWFEGAQGSL (249 aa). S-adenosyl-L-methionine is bound at residue Pro-223. The Proton acceptor role is filled by Asp-246. The active-site Proton donor is Lys-268. S-adenosyl-L-methionine contacts are provided by residues 299-301, Ile-304, 329-330, Met-381, and Gly-410; these read GGD and TA.

It in the N-terminal section; belongs to the precorrin-2 dehydrogenase / sirohydrochlorin ferrochelatase family. In the C-terminal section; belongs to the precorrin methyltransferase family.

It carries out the reaction uroporphyrinogen III + 2 S-adenosyl-L-methionine = precorrin-2 + 2 S-adenosyl-L-homocysteine + H(+). The catalysed reaction is precorrin-2 + NAD(+) = sirohydrochlorin + NADH + 2 H(+). It catalyses the reaction siroheme + 2 H(+) = sirohydrochlorin + Fe(2+). Its pathway is cofactor biosynthesis; adenosylcobalamin biosynthesis; precorrin-2 from uroporphyrinogen III: step 1/1. It participates in cofactor biosynthesis; adenosylcobalamin biosynthesis; sirohydrochlorin from precorrin-2: step 1/1. It functions in the pathway porphyrin-containing compound metabolism; siroheme biosynthesis; precorrin-2 from uroporphyrinogen III: step 1/1. The protein operates within porphyrin-containing compound metabolism; siroheme biosynthesis; siroheme from sirohydrochlorin: step 1/1. Its pathway is porphyrin-containing compound metabolism; siroheme biosynthesis; sirohydrochlorin from precorrin-2: step 1/1. Its function is as follows. Multifunctional enzyme that catalyzes the SAM-dependent methylations of uroporphyrinogen III at position C-2 and C-7 to form precorrin-2 via precorrin-1. Then it catalyzes the NAD-dependent ring dehydrogenation of precorrin-2 to yield sirohydrochlorin. Finally, it catalyzes the ferrochelation of sirohydrochlorin to yield siroheme. This Ectopseudomonas mendocina (strain ymp) (Pseudomonas mendocina) protein is Siroheme synthase.